We begin with the raw amino-acid sequence, 206 residues long: Adenylyl-sulfate kinase (206 aa).

ATP is bound at residue 36 to 43 (GLSGSGKS). The active-site Phosphoserine intermediate is the S110.

This sequence belongs to the APS kinase family.

It catalyses the reaction adenosine 5'-phosphosulfate + ATP = 3'-phosphoadenylyl sulfate + ADP + H(+). It functions in the pathway sulfur metabolism; hydrogen sulfide biosynthesis; sulfite from sulfate: step 2/3. Its function is as follows. Catalyzes the synthesis of activated sulfate. The sequence is that of Adenylyl-sulfate kinase (cysC) from Buchnera aphidicola subsp. Acyrthosiphon pisum (strain APS) (Acyrthosiphon pisum symbiotic bacterium).